A 406-amino-acid polypeptide reads, in one-letter code: Cysteine desulfurase (406 aa).

N6-(pyridoxal phosphate)lysine is present on lysine 226. Cysteine 364 serves as the catalytic Cysteine persulfide intermediate.

Belongs to the class-V pyridoxal-phosphate-dependent aminotransferase family. Csd subfamily. Homodimer. Interacts with SufE and the SufBCD complex composed of SufB, SufC and SufD. The interaction with SufE is required to mediate the direct transfer of the sulfur atom from the S-sulfanylcysteine. Pyridoxal 5'-phosphate serves as cofactor.

The protein localises to the cytoplasm. It catalyses the reaction (sulfur carrier)-H + L-cysteine = (sulfur carrier)-SH + L-alanine. It carries out the reaction L-selenocysteine + AH2 = hydrogenselenide + L-alanine + A + H(+). It participates in cofactor biosynthesis; iron-sulfur cluster biosynthesis. In terms of biological role, cysteine desulfurases mobilize the sulfur from L-cysteine to yield L-alanine, an essential step in sulfur metabolism for biosynthesis of a variety of sulfur-containing biomolecules. Component of the suf operon, which is activated and required under specific conditions such as oxidative stress and iron limitation. Acts as a potent selenocysteine lyase in vitro, that mobilizes selenium from L-selenocysteine. Selenocysteine lyase activity is however unsure in vivo. The polypeptide is Cysteine desulfurase (Yersinia pestis bv. Antiqua (strain Antiqua)).